The chain runs to 107 residues: Nucleoid-associated protein Atu0095 (107 aa).

The segment at 81 to 107 (KGEAQAQEKMADLTAGLPLPPGMKLPF) is disordered. Residues 98–107 (PLPPGMKLPF) are compositionally biased toward pro residues.

Belongs to the YbaB/EbfC family. As to quaternary structure, homodimer.

Its subcellular location is the cytoplasm. It localises to the nucleoid. Functionally, binds to DNA and alters its conformation. May be involved in regulation of gene expression, nucleoid organization and DNA protection. This is Nucleoid-associated protein Atu0095 from Agrobacterium fabrum (strain C58 / ATCC 33970) (Agrobacterium tumefaciens (strain C58)).